Consider the following 315-residue polypeptide: Ankyrin repeat domain-containing protein SOWAHD (315 aa).

The interval 1–39 (MAQLGGAANRAPTASLAPTSQSLRCAPQPRPSRADTGSL) is disordered. ANK repeat units lie at residues 112 to 141 (PREHAWILAAAEGRYEVLRELLEAEPELLL), 147 to 162 (TGYSVLHWLAKHGRHE), and 186 to 216 (GGLTPLHLAALQGHDMVIKVLVGALGADATR).

Belongs to the SOWAH family.

This chain is Ankyrin repeat domain-containing protein SOWAHD (SOWAHD), found in Homo sapiens (Human).